The sequence spans 430 residues: GTPase Obg (430 aa).

The 158-residue stretch at 1 to 158 (MFVDQVKISL…LDVSLELKLL (158 aa)) folds into the Obg domain. The tract at residues 118-145 (KGGRGGRGNSRFATPRNPAPDFSEKGEP) is disordered. In terms of domain architecture, OBG-type G spans 159–329 (ADVGLVGFPS…LLYAIADKLE (171 aa)). GTP is bound by residues 165–172 (GFPSVGKS), 190–194 (FTTIK), 212–215 (DLPG), 282–285 (NKMD), and 310–312 (STI). Positions 172 and 192 each coordinate Mg(2+). The 79-residue stretch at 352–430 (KHTPSQDKFT…ILGGEFEFVE (79 aa)) folds into the OCT domain.

This sequence belongs to the TRAFAC class OBG-HflX-like GTPase superfamily. OBG GTPase family. Monomer. Mg(2+) serves as cofactor.

It localises to the cytoplasm. Functionally, an essential GTPase which binds GTP, GDP and possibly (p)ppGpp with moderate affinity, with high nucleotide exchange rates and a fairly low GTP hydrolysis rate. Plays a role in control of the cell cycle, stress response, ribosome biogenesis and in those bacteria that undergo differentiation, in morphogenesis control. This chain is GTPase Obg, found in Staphylococcus aureus (strain COL).